A 340-amino-acid chain; its full sequence is Glycerol-3-phosphate dehydrogenase [NAD(P)+] (340 aa).

Ser-12, Trp-13, Lys-34, and Lys-107 together coordinate NADPH. Lys-107, Gly-138, and Ser-140 together coordinate sn-glycerol 3-phosphate. Ala-142 serves as a coordination point for NADPH. 5 residues coordinate sn-glycerol 3-phosphate: Lys-193, Asp-246, Ser-256, Arg-257, and Asn-258. Lys-193 functions as the Proton acceptor in the catalytic mechanism. Arg-257 is a binding site for NADPH. NADPH contacts are provided by Ile-281 and Glu-283.

Belongs to the NAD-dependent glycerol-3-phosphate dehydrogenase family.

The protein localises to the cytoplasm. It carries out the reaction sn-glycerol 3-phosphate + NAD(+) = dihydroxyacetone phosphate + NADH + H(+). The catalysed reaction is sn-glycerol 3-phosphate + NADP(+) = dihydroxyacetone phosphate + NADPH + H(+). The protein operates within membrane lipid metabolism; glycerophospholipid metabolism. Its function is as follows. Catalyzes the reduction of the glycolytic intermediate dihydroxyacetone phosphate (DHAP) to sn-glycerol 3-phosphate (G3P), the key precursor for phospholipid synthesis. This is Glycerol-3-phosphate dehydrogenase [NAD(P)+] from Enterococcus faecalis (strain ATCC 700802 / V583).